The following is a 503-amino-acid chain: Variant surface glycoprotein AnTaT 1.1 (503 aa).

A signal peptide spans methionine 1–alanine 29. 2 cysteine pairs are disulfide-bonded: cysteine 45–cysteine 172 and cysteine 154–cysteine 209. N-linked (GlcNAc...) asparagine glycosylation occurs at asparagine 113. 2 N-linked (GlcNAc...) asparagine glycosylation sites follow: asparagine 419 and asparagine 432. A lipid anchor (GPI-anchor amidated aspartate) is attached at aspartate 480. Positions serine 481–phenylalanine 503 are cleaved as a propeptide — removed in mature form.

The protein resides in the cell membrane. VSG forms a coat on the surface of the parasite. The trypanosome evades the immune response of the host by expressing a series of antigenically distinct VSGs from an estimated 1000 VSG genes. This Trypanosoma brucei brucei protein is Variant surface glycoprotein AnTaT 1.1.